Consider the following 343-residue polypeptide: Branched-chain-amino-acid aminotransferase (343 aa).

At lysine 182 the chain carries N6-(pyridoxal phosphate)lysine.

Belongs to the class-IV pyridoxal-phosphate-dependent aminotransferase family. Requires pyridoxal 5'-phosphate as cofactor.

It catalyses the reaction L-leucine + 2-oxoglutarate = 4-methyl-2-oxopentanoate + L-glutamate. It carries out the reaction L-isoleucine + 2-oxoglutarate = (S)-3-methyl-2-oxopentanoate + L-glutamate. The catalysed reaction is L-valine + 2-oxoglutarate = 3-methyl-2-oxobutanoate + L-glutamate. The protein operates within amino-acid biosynthesis; L-isoleucine biosynthesis; L-isoleucine from 2-oxobutanoate: step 4/4. Its pathway is amino-acid biosynthesis; L-leucine biosynthesis; L-leucine from 3-methyl-2-oxobutanoate: step 4/4. It participates in amino-acid biosynthesis; L-valine biosynthesis; L-valine from pyruvate: step 4/4. Its function is as follows. Acts on leucine, isoleucine and valine. The protein is Branched-chain-amino-acid aminotransferase (ilvE) of Haemophilus influenzae (strain ATCC 51907 / DSM 11121 / KW20 / Rd).